Here is a 910-residue protein sequence, read N- to C-terminus: Protein translocase subunit SecA (910 aa).

Residues Q87, 105 to 109 (GEGKT), and D501 each bind ATP. Zn(2+) is bound by residues C894, C896, C905, and H906.

Belongs to the SecA family. As to quaternary structure, monomer and homodimer. Part of the essential Sec protein translocation apparatus which comprises SecA, SecYEG and auxiliary proteins SecDF-YajC and YidC. Requires Zn(2+) as cofactor.

Its subcellular location is the cell inner membrane. The protein resides in the cytoplasm. It catalyses the reaction ATP + H2O + cellular proteinSide 1 = ADP + phosphate + cellular proteinSide 2.. Its function is as follows. Part of the Sec protein translocase complex. Interacts with the SecYEG preprotein conducting channel. Has a central role in coupling the hydrolysis of ATP to the transfer of proteins into and across the cell membrane, serving both as a receptor for the preprotein-SecB complex and as an ATP-driven molecular motor driving the stepwise translocation of polypeptide chains across the membrane. The sequence is that of Protein translocase subunit SecA from Acidiphilium cryptum (strain JF-5).